The sequence spans 230 residues: Phosphoribosylaminoimidazole-succinocarboxamide synthase (230 aa).

The protein belongs to the SAICAR synthetase family.

The enzyme catalyses 5-amino-1-(5-phospho-D-ribosyl)imidazole-4-carboxylate + L-aspartate + ATP = (2S)-2-[5-amino-1-(5-phospho-beta-D-ribosyl)imidazole-4-carboxamido]succinate + ADP + phosphate + 2 H(+). It participates in purine metabolism; IMP biosynthesis via de novo pathway; 5-amino-1-(5-phospho-D-ribosyl)imidazole-4-carboxamide from 5-amino-1-(5-phospho-D-ribosyl)imidazole-4-carboxylate: step 1/2. This chain is Phosphoribosylaminoimidazole-succinocarboxamide synthase (purC), found in Thermotoga maritima (strain ATCC 43589 / DSM 3109 / JCM 10099 / NBRC 100826 / MSB8).